We begin with the raw amino-acid sequence, 304 residues long: Homoserine O-acetyltransferase (304 aa).

The Acyl-thioester intermediate role is filled by cysteine 142. Residues lysine 163 and serine 191 each coordinate substrate. Histidine 234 functions as the Proton acceptor in the catalytic mechanism. The active site involves glutamate 236. Position 248 (arginine 248) interacts with substrate.

It belongs to the MetA family.

It is found in the cytoplasm. It catalyses the reaction L-homoserine + acetyl-CoA = O-acetyl-L-homoserine + CoA. The protein operates within amino-acid biosynthesis; L-methionine biosynthesis via de novo pathway; O-acetyl-L-homoserine from L-homoserine: step 1/1. Transfers an acetyl group from acetyl-CoA to L-homoserine, forming acetyl-L-homoserine. The sequence is that of Homoserine O-acetyltransferase from Thermotoga neapolitana (strain ATCC 49049 / DSM 4359 / NBRC 107923 / NS-E).